The chain runs to 550 residues: Glucose-6-phosphate isomerase (550 aa).

Residue E357 is the Proton donor of the active site. Catalysis depends on residues H388 and K516.

This sequence belongs to the GPI family.

It localises to the cytoplasm. The enzyme catalyses alpha-D-glucose 6-phosphate = beta-D-fructose 6-phosphate. Its pathway is carbohydrate biosynthesis; gluconeogenesis. It functions in the pathway carbohydrate degradation; glycolysis; D-glyceraldehyde 3-phosphate and glycerone phosphate from D-glucose: step 2/4. Its function is as follows. Catalyzes the reversible isomerization of glucose-6-phosphate to fructose-6-phosphate. The chain is Glucose-6-phosphate isomerase from Psychromonas ingrahamii (strain DSM 17664 / CCUG 51855 / 37).